The sequence spans 345 residues: Phosphoribosylformylglycinamidine cyclo-ligase (345 aa).

This sequence belongs to the AIR synthase family.

It is found in the cytoplasm. The catalysed reaction is 2-formamido-N(1)-(5-O-phospho-beta-D-ribosyl)acetamidine + ATP = 5-amino-1-(5-phospho-beta-D-ribosyl)imidazole + ADP + phosphate + H(+). It functions in the pathway purine metabolism; IMP biosynthesis via de novo pathway; 5-amino-1-(5-phospho-D-ribosyl)imidazole from N(2)-formyl-N(1)-(5-phospho-D-ribosyl)glycinamide: step 2/2. This Salmonella typhimurium (strain LT2 / SGSC1412 / ATCC 700720) protein is Phosphoribosylformylglycinamidine cyclo-ligase.